We begin with the raw amino-acid sequence, 198 residues long: Segregation and condensation protein B (198 aa).

The disordered stretch occupies residues 167–198 (PKLADPEAEDPDQSEMDLFFDRFNQSKEQEEE). The segment covering 172–181 (PEAEDPDQSE) has biased composition (acidic residues).

Belongs to the ScpB family. As to quaternary structure, homodimer. Homodimerization may be required to stabilize the binding of ScpA to the Smc head domains. Component of a cohesin-like complex composed of ScpA, ScpB and the Smc homodimer, in which ScpA and ScpB bind to the head domain of Smc. The presence of the three proteins is required for the association of the complex with DNA.

The protein localises to the cytoplasm. Participates in chromosomal partition during cell division. May act via the formation of a condensin-like complex containing Smc and ScpA that pull DNA away from mid-cell into both cell halves. In Listeria innocua serovar 6a (strain ATCC BAA-680 / CLIP 11262), this protein is Segregation and condensation protein B.